The primary structure comprises 525 residues: Mannuronan C5-epimerase AlgG (525 aa).

An N-terminal signal peptide occupies residues 1-29; sequence MNVQRKLASTQLKPVLLGVLLATSAWSQA. PbH1 repeat units lie at residues 287-309, 311-334, 336-358, 360-382, and 383-405; these read ADDV…DPHD, SERL…IVSR, VNNS…VLDR, SEHN…TLYE, and SSNN…RMRN. His-308 serves as the catalytic Proton acceptor.

The protein belongs to the D-mannuronate C5-epimerase family.

The protein localises to the periplasm. It catalyses the reaction [(1-&gt;4)-beta-D-mannuronosyl](n) = [alginate](n). It participates in glycan biosynthesis; alginate biosynthesis. Inhibited by zinc. Functionally, catalyzes the epimerization of beta-D-mannuronate to alpha-L-guluronate during the synthesis of the linear polysaccharide alginate. In addition, is part of a periplasmic protein complex that protects alginate from degradation by AlgL by channeling the newly formed alginate polymer through a scaffold that transfers the alginate polymer through the periplasmic space to the outer membrane secretin AlgE. The polypeptide is Mannuronan C5-epimerase AlgG (Azotobacter vinelandii).